We begin with the raw amino-acid sequence, 192 residues long: Secreted and transmembrane protein 1A (192 aa).

The N-terminal stretch at 1 to 27 is a signal peptide; it reads MMTCPSVPAIPTLWLFSILLLVVSLNA. At 28 to 165 the chain is on the extracellular side; it reads QNKSWDNPIC…SSPIEGKPGT (138 aa). Residues asparagine 29, asparagine 55, asparagine 84, and asparagine 127 are each glycosylated (N-linked (GlcNAc...) asparagine). A helical transmembrane segment spans residues 166 to 186; that stretch reads LVGVITVIFILGVAGFITFIY. Topologically, residues 187-192 are cytoplasmic; it reads YRHRRS.

This sequence belongs to the SECTM family.

It is found in the cell membrane. It localises to the secreted. The chain is Secreted and transmembrane protein 1A from Mus musculus (Mouse).